The chain runs to 537 residues: CTP synthase (537 aa).

The amidoligase domain stretch occupies residues 1–265 (MVHFIFVTGG…DNKVLKFFNI (265 aa)). Ser-13 is a CTP binding site. Ser-13 is a binding site for UTP. Residues 14–19 (SLGKGL) and Asp-71 each bind ATP. Mg(2+) is bound by residues Asp-71 and Glu-139. CTP is bound by residues 146 to 148 (DIE) and Lys-222. Position 222 (Lys-222) interacts with UTP. In terms of domain architecture, Glutamine amidotransferase type-1 spans 290–536 (RIAIIAKYHK…IKAAIEYNKC (247 aa)). Position 352 (Gly-352) interacts with L-glutamine. Cys-379 (nucleophile; for glutamine hydrolysis) is an active-site residue. Residues 380 to 383 (FGMQ), Glu-403, and Arg-464 each bind L-glutamine. Residues His-509 and Glu-511 contribute to the active site.

The protein belongs to the CTP synthase family. In terms of assembly, homotetramer.

The enzyme catalyses UTP + L-glutamine + ATP + H2O = CTP + L-glutamate + ADP + phosphate + 2 H(+). It carries out the reaction L-glutamine + H2O = L-glutamate + NH4(+). It catalyses the reaction UTP + NH4(+) + ATP = CTP + ADP + phosphate + 2 H(+). It functions in the pathway pyrimidine metabolism; CTP biosynthesis via de novo pathway; CTP from UDP: step 2/2. Allosterically activated by GTP, when glutamine is the substrate; GTP has no effect on the reaction when ammonia is the substrate. The allosteric effector GTP functions by stabilizing the protein conformation that binds the tetrahedral intermediate(s) formed during glutamine hydrolysis. Inhibited by the product CTP, via allosteric rather than competitive inhibition. Functionally, catalyzes the ATP-dependent amination of UTP to CTP with either L-glutamine or ammonia as the source of nitrogen. Regulates intracellular CTP levels through interactions with the four ribonucleotide triphosphates. This chain is CTP synthase, found in Rickettsia peacockii (strain Rustic).